The primary structure comprises 123 residues: Small ribosomal subunit protein uS12 (123 aa).

The residue at position 89 (Asp-89) is a 3-methylthioaspartic acid.

The protein belongs to the universal ribosomal protein uS12 family. In terms of assembly, part of the 30S ribosomal subunit. Contacts proteins S8 and S17. May interact with IF1 in the 30S initiation complex.

Functionally, with S4 and S5 plays an important role in translational accuracy. Interacts with and stabilizes bases of the 16S rRNA that are involved in tRNA selection in the A site and with the mRNA backbone. Located at the interface of the 30S and 50S subunits, it traverses the body of the 30S subunit contacting proteins on the other side and probably holding the rRNA structure together. The combined cluster of proteins S8, S12 and S17 appears to hold together the shoulder and platform of the 30S subunit. The chain is Small ribosomal subunit protein uS12 from Rhodopseudomonas palustris (strain BisA53).